The primary structure comprises 164 residues: Sperm axonemal maintenance protein CFAP97D1 (164 aa).

Residues 61 to 88 are a coiled coil; sequence LSKIQGEQKRIDKIEYENRQLCQKIANA.

Belongs to the CFAP97 family. As to expression, expressed exclusively in testis.

Its function is as follows. Required for male fertility through its role in axonemal doublet stabilization which is essential for sperm motility and fertilization. The protein is Sperm axonemal maintenance protein CFAP97D1 (Cfap97d1) of Mus musculus (Mouse).